We begin with the raw amino-acid sequence, 362 residues long: MATLSFRNVKKTYAGNVPVIHGSDMDVADGEFIVIVGPSGCGKSTLMRMVAGLETVTEGEILIDDKVVNTLEPAERDIAMVFQNYALYPHMSVFDNMAYGLKIRRLPKDEIRKRVEAAAQILELGKLLDRRPRALSGGQRQRVAMGRAIVREPKVFLFDEPLSNLDAKLRVAMRLEILKLHRRLNTTSLYVTHDQVEAMTLAHRMVVMYQGVPEQIGTPMEVFEKPASTFVAGFIGSPPMNLLEVAVGGDGIVHTSDGIALDISPLAVPQQVRGRKVVMGLRPEHMLLNAQGLAAEIEMIETLGSEQLVHGRCGKHMVVVRCSTRQFSETPARVGDTLTIGPDGRHPLHWFEADTGRRVEGL.

The region spanning 4-235 (LSFRNVKKTY…PASTFVAGFI (232 aa)) is the ABC transporter domain. 37 to 44 (GPSGCGKS) contacts ATP.

It belongs to the ABC transporter superfamily. sn-glycerol-3-phosphate importer (TC 3.A.1.1.3) family. As to quaternary structure, the complex is composed of two ATP-binding proteins (UgpC), two transmembrane proteins (UgpA and UgpE) and a solute-binding protein (UgpB).

It localises to the cell inner membrane. It catalyses the reaction sn-glycerol 3-phosphate(out) + ATP + H2O = sn-glycerol 3-phosphate(in) + ADP + phosphate + H(+). Its function is as follows. Part of the ABC transporter complex UgpBAEC involved in sn-glycerol-3-phosphate (G3P) import. Responsible for energy coupling to the transport system. This is sn-glycerol-3-phosphate import ATP-binding protein UgpC from Bordetella parapertussis (strain 12822 / ATCC BAA-587 / NCTC 13253).